A 124-amino-acid polypeptide reads, in one-letter code: Small ribosomal subunit protein uS12 (124 aa).

The interval 1–24 (MPTINQLIKKPRKSQKEKTASPAL) is disordered. 3-methylthioaspartic acid is present on D89.

It belongs to the universal ribosomal protein uS12 family. As to quaternary structure, part of the 30S ribosomal subunit. Contacts proteins S8 and S17. May interact with IF1 in the 30S initiation complex.

With S4 and S5 plays an important role in translational accuracy. In terms of biological role, interacts with and stabilizes bases of the 16S rRNA that are involved in tRNA selection in the A site and with the mRNA backbone. Located at the interface of the 30S and 50S subunits, it traverses the body of the 30S subunit contacting proteins on the other side and probably holding the rRNA structure together. The combined cluster of proteins S8, S12 and S17 appears to hold together the shoulder and platform of the 30S subunit. This chain is Small ribosomal subunit protein uS12, found in Borrelia hermsii (strain HS1 / DAH).